The chain runs to 472 residues: Ribulose bisphosphate carboxylase large chain 1 (472 aa).

Residues N115 and T165 each coordinate substrate. Residue K167 is the Proton acceptor of the active site. K169 is a binding site for substrate. Mg(2+) is bound by residues K193, D195, and E196. Residue K193 is modified to N6-carboxylysine. The Proton acceptor role is filled by H286. Residues R287, H319, and S371 each contribute to the substrate site.

Belongs to the RuBisCO large chain family. Type I subfamily. In terms of assembly, heterohexadecamer of 8 large chains and 8 small chains. Mg(2+) is required as a cofactor.

It carries out the reaction 2 (2R)-3-phosphoglycerate + 2 H(+) = D-ribulose 1,5-bisphosphate + CO2 + H2O. It catalyses the reaction D-ribulose 1,5-bisphosphate + O2 = 2-phosphoglycolate + (2R)-3-phosphoglycerate + 2 H(+). Functionally, ruBisCO catalyzes two reactions: the carboxylation of D-ribulose 1,5-bisphosphate, the primary event in carbon dioxide fixation, as well as the oxidative fragmentation of the pentose substrate. Both reactions occur simultaneously and in competition at the same active site. In Hydrogenovibrio marinus, this protein is Ribulose bisphosphate carboxylase large chain 1.